Consider the following 380-residue polypeptide: Carbamoyl phosphate synthase small chain (380 aa).

The tract at residues 1-184 (MTTSTRGAHR…EAYVVPAIGE (184 aa)) is CPSase. The L-glutamine site is built by serine 55, glycine 236, and glycine 238. The Glutamine amidotransferase type-1 domain occupies 188–380 (TVAAVDLGIK…FVNLMEGQRA (193 aa)). The Nucleophile role is filled by cysteine 264. L-glutamine is bound by residues phenylalanine 265, glutamine 268, asparagine 306, glycine 308, and phenylalanine 309. Catalysis depends on residues histidine 354 and glutamate 356.

It belongs to the CarA family. Composed of two chains; the small (or glutamine) chain promotes the hydrolysis of glutamine to ammonia, which is used by the large (or ammonia) chain to synthesize carbamoyl phosphate. Tetramer of heterodimers (alpha,beta)4.

The enzyme catalyses hydrogencarbonate + L-glutamine + 2 ATP + H2O = carbamoyl phosphate + L-glutamate + 2 ADP + phosphate + 2 H(+). The catalysed reaction is L-glutamine + H2O = L-glutamate + NH4(+). It participates in amino-acid biosynthesis; L-arginine biosynthesis; carbamoyl phosphate from bicarbonate: step 1/1. It functions in the pathway pyrimidine metabolism; UMP biosynthesis via de novo pathway; (S)-dihydroorotate from bicarbonate: step 1/3. Functionally, small subunit of the glutamine-dependent carbamoyl phosphate synthetase (CPSase). CPSase catalyzes the formation of carbamoyl phosphate from the ammonia moiety of glutamine, carbonate, and phosphate donated by ATP, constituting the first step of 2 biosynthetic pathways, one leading to arginine and/or urea and the other to pyrimidine nucleotides. The small subunit (glutamine amidotransferase) binds and cleaves glutamine to supply the large subunit with the substrate ammonia. This Streptomyces coelicolor (strain ATCC BAA-471 / A3(2) / M145) protein is Carbamoyl phosphate synthase small chain.